Here is a 273-residue protein sequence, read N- to C-terminus: Dermonecrotic toxin LspaSicTox-alphaIA1ii (273 aa).

His5 is a catalytic residue. Mg(2+)-binding residues include Glu25 and Asp27. His41 functions as the Nucleophile in the catalytic mechanism. 2 cysteine pairs are disulfide-bonded: Cys45–Cys51 and Cys47–Cys190. Asp85 is a Mg(2+) binding site.

Belongs to the arthropod phospholipase D family. Class II subfamily. Mg(2+) is required as a cofactor. Expressed by the venom gland.

It localises to the secreted. It carries out the reaction an N-(acyl)-sphingosylphosphocholine = an N-(acyl)-sphingosyl-1,3-cyclic phosphate + choline. The enzyme catalyses an N-(acyl)-sphingosylphosphoethanolamine = an N-(acyl)-sphingosyl-1,3-cyclic phosphate + ethanolamine. It catalyses the reaction a 1-acyl-sn-glycero-3-phosphocholine = a 1-acyl-sn-glycero-2,3-cyclic phosphate + choline. The catalysed reaction is a 1-acyl-sn-glycero-3-phosphoethanolamine = a 1-acyl-sn-glycero-2,3-cyclic phosphate + ethanolamine. Dermonecrotic toxins cleave the phosphodiester linkage between the phosphate and headgroup of certain phospholipids (sphingolipid and lysolipid substrates), forming an alcohol (often choline) and a cyclic phosphate. This toxin acts on sphingomyelin (SM). It may also act on ceramide phosphoethanolamine (CPE), lysophosphatidylcholine (LPC) and lysophosphatidylethanolamine (LPE), but not on lysophosphatidylserine (LPS), and lysophosphatidylglycerol (LPG). It acts by transphosphatidylation, releasing exclusively cyclic phosphate products as second products. Induces dermonecrosis, hemolysis, increased vascular permeability, edema, inflammatory response, and platelet aggregation. The polypeptide is Dermonecrotic toxin LspaSicTox-alphaIA1ii (Loxosceles spadicea (Recluse spider)).